Consider the following 653-residue polypeptide: DNA mismatch repair protein MutL (653 aa).

The segment at 368–413 is disordered; sequence EVSQVAEPEGKTDITNKKETETKEKAEKKENKQEEKEEKTSAPEYV. Residues 375–408 are compositionally biased toward basic and acidic residues; it reads PEGKTDITNKKETETKEKAEKKENKQEEKEEKTS.

The protein belongs to the DNA mismatch repair MutL/HexB family.

This protein is involved in the repair of mismatches in DNA. It is required for dam-dependent methyl-directed DNA mismatch repair. May act as a 'molecular matchmaker', a protein that promotes the formation of a stable complex between two or more DNA-binding proteins in an ATP-dependent manner without itself being part of a final effector complex. This chain is DNA mismatch repair protein MutL, found in Lactobacillus delbrueckii subsp. bulgaricus (strain ATCC 11842 / DSM 20081 / BCRC 10696 / JCM 1002 / NBRC 13953 / NCIMB 11778 / NCTC 12712 / WDCM 00102 / Lb 14).